The primary structure comprises 362 residues: 2-oxoglutarate-dependent dioxygenase lolO2 (362 aa).

Residues 199–312 (TWNYFLGQPV…RYSLVFFGHL (114 aa)) enclose the Fe2OG dioxygenase domain. Residues His-222, Asp-224, and His-280 each contribute to the Fe cation site. Residue Arg-303 participates in 2-oxoglutarate binding.

The protein belongs to the iron/ascorbate-dependent oxidoreductase family. Requires Fe(2+) as cofactor.

It participates in alkaloid biosynthesis. Its function is as follows. 2-oxoglutarate-dependent dioxygenase; part of the gene cluster that mediates the biosynthesis of loline alkaloids, potent insecticidal agents composed of a pyrrolizidine ring system and an uncommon ether bridge linking carbons 2 and 7. Lolines are structurally differentiated by the various modifications of the L-amino group and include norloline, loline, N-methylloline, N-acetylloline, N-acetylnorloline, and N-formylloline. The first committed step is the condensation of O-acetyl-L-homoserine (derived from L-aspartic acid) and L-proline, probably catalyzed by the gamma-type pyridoxal 5'-phosphate(PLP)-dependent enzyme lolC, to give the diamino diacid, NACPP. Ensuing cyclization, decarboxylation, and acetylation steps yield 1-exo-acetamidopyrrolizidine (AcAP). LolO is required for installation of the ether bridge upon the pathway intermediate, 1-exo-acetamidopyrrolizidine (AcAP). In sequential 2-oxoglutarate- and O(2)-consuming steps, lolO removes hydrogens from C2 and C7 of AcAP to form both carbon-oxygen bonds in N-acetylnorloline (NANL), the precursor to all other lolines. The enzymes lolD, lolE, lolF and lolT have also been proposed to be involved in the ether-bridge installation. Further processing of the exocyclic moiety of NANL by fungal N-acetamidase (LolN), methyltransferase (LolM), and cytochrome P450 (LolP) enzymes, with occasional involvement of a plant acetyltransferase, generates the other known lolines. LolN transforms NANL to norlonine which is monomethylated and dimethylated to respectively lonine and N-methyllonine (NML) by lolM. LolP catalyzes hydroxylation of the methyl group in N-methylloline (NML) and further oxygenation to N-formylloline (NFL). A plant acetyltransferase is responsible for the acetylation of loline to form N-acetylloline (NAL). LolA might interact with aspartate kinase to prevent feedback inhibition of its activity by these end products and thereby promote production of L-homoserine from L-aspartate. In Epichloe uncinata (Endophyte fungus), this protein is 2-oxoglutarate-dependent dioxygenase lolO2.